Reading from the N-terminus, the 864-residue chain is Seed linoleate 9S-lipoxygenase-2 (864 aa).

Residues 46–171 form the PLAT domain; sequence SGINIIGSTL…LYKSPRIFFA (126 aa). The 691-residue stretch at 174–864 folds into the Lipoxygenase domain; sequence SYLPSETPSP…FRGIPNSISI (691 aa). The interval 230-264 is disordered; it reads PILGGSSTHPYPRRGRTGRYPTRKDPNSEKPATET. Over residues 251–264 the composition is skewed to basic and acidic residues; that stretch reads TRKDPNSEKPATET. Fe cation-binding residues include H524, H529, H716, N720, and I864.

It belongs to the lipoxygenase family. The cofactor is Fe cation.

The protein resides in the cytoplasm. The enzyme catalyses (9Z,12Z)-octadecadienoate + O2 = (9S)-hydroperoxy-(10E,12Z)-octadecadienoate. Its pathway is lipid metabolism; oxylipin biosynthesis. Functionally, plant lipoxygenase may be involved in a number of diverse aspects of plant physiology including growth and development, pest resistance, and senescence or responses to wounding. It catalyzes the hydroperoxidation of lipids containing a cis,cis-1,4-pentadiene structure. In Pisum sativum (Garden pea), this protein is Seed linoleate 9S-lipoxygenase-2 (LOX1.2).